The primary structure comprises 239 residues: Aspartate/glutamate leucyltransferase (239 aa).

Belongs to the R-transferase family. Bpt subfamily.

Its subcellular location is the cytoplasm. The catalysed reaction is N-terminal L-glutamyl-[protein] + L-leucyl-tRNA(Leu) = N-terminal L-leucyl-L-glutamyl-[protein] + tRNA(Leu) + H(+). It catalyses the reaction N-terminal L-aspartyl-[protein] + L-leucyl-tRNA(Leu) = N-terminal L-leucyl-L-aspartyl-[protein] + tRNA(Leu) + H(+). Its function is as follows. Functions in the N-end rule pathway of protein degradation where it conjugates Leu from its aminoacyl-tRNA to the N-termini of proteins containing an N-terminal aspartate or glutamate. The sequence is that of Aspartate/glutamate leucyltransferase from Campylobacter jejuni subsp. jejuni serotype O:23/36 (strain 81-176).